A 179-amino-acid chain; its full sequence is Putative BPIFA4P protein (179 aa).

The signal sequence occupies residues 1-20 (MLNVSGLFVLLCGLLVSSSA).

Belongs to the BPI/LBP/Plunc superfamily. Plunc family. As to expression, expressed in breast cancer and salivary gland.

The protein localises to the secreted. Functionally, major protein in sweat, has surfactant properties. This chain is Putative BPIFA4P protein (BPIFA4P), found in Homo sapiens (Human).